We begin with the raw amino-acid sequence, 514 residues long: MADAEVIILPKKHKKKKERKSLPEEDVAEIQHAEEFLIKPESKVAKLDTSQWPLLLKNFDKLNVRTTHYTPLACGSNPLKREIGDYIRTGFINLDKPSNPSSHEVVAWIRRILRVEKTGHSGTLDPKVTGCLIVCIERATRLVKSQQSAGKEYVGIVRLHNAIEGGTQLSRALETLTGALFQRPPLIAAVKRQLRVRTIYESKMIEYDPERRLGIFWVSCEAGTYIRTLCVHLGLLLGVGGQMQELRRVRSGVMSEKDHMVTMHDVLDAQWLYDNHKDESYLRRVVYPLEKLLTSHKRLVMKDSAVNAICYGAKIMLPGVLRYEDGIEVNQEIVVITTKGEAICMAIALMTTAVISTCDHGIVAKIKRVIMERDTYPRKWGLGPKASQKKLMIKQGLLDKHGKPTDSTPATWKQEYVDYSESAKKEVVAEVVKAPQVVAEAAKTAKRKRESESESDETPPAAPQLIKKEKKKSKKDKKAKAGLESGAEPGDGDSDTTKKKKKKKKAKEVELVSE.

Ala-2 is modified (N-acetylalanine). The interval 2-21 is nucleolar localization; sequence ADAEVIILPKKHKKKKERKS. Lys-20 participates in a covalent cross-link: Glycyl lysine isopeptide (Lys-Gly) (interchain with G-Cter in SUMO2). Ser-21 bears the Phosphoserine mark. Residues Lys-39 and Lys-43 each participate in a glycyl lysine isopeptide (Lys-Gly) (interchain with G-Cter in SUMO2) cross-link. The Nucleophile role is filled by Asp-125. Lys-191 is covalently cross-linked (Glycyl lysine isopeptide (Lys-Gly) (interchain with G-Cter in SUMO2)). One can recognise a PUA domain in the interval 296-371; sequence HKRLVMKDSA…IVAKIKRVIM (76 aa). Phosphoserine is present on Ser-387. A Glycyl lysine isopeptide (Lys-Gly) (interchain with G-Cter in SUMO2) cross-link involves residue Lys-394. Lys-413 participates in a covalent cross-link: Glycyl lysine isopeptide (Lys-Gly) (interchain with G-Cter in SUMO1); alternate. Lys-413 participates in a covalent cross-link: Glycyl lysine isopeptide (Lys-Gly) (interchain with G-Cter in SUMO2); alternate. Glycyl lysine isopeptide (Lys-Gly) (interchain with G-Cter in SUMO2) cross-links involve residues Lys-424 and Lys-433. The tract at residues 443 to 514 is disordered; sequence KTAKRKRESE…KAKEVELVSE (72 aa). The tract at residues 446–514 is nuclear and nucleolar localization; the sequence is KRKRESESES…KAKEVELVSE (69 aa). Residues Ser-451, Ser-453, and Ser-455 each carry the phosphoserine modification. Thr-458 is modified (phosphothreonine). Residue Lys-467 forms a Glycyl lysine isopeptide (Lys-Gly) (interchain with G-Cter in SUMO2) linkage. Basic residues predominate over residues 468 to 480; it reads KEKKKSKKDKKAK. Phosphoserine is present on residues Ser-485, Ser-494, and Ser-513.

This sequence belongs to the pseudouridine synthase TruB family. As to quaternary structure, part of the H/ACA small nucleolar ribonucleoprotein (H/ACA snoRNP) complex, which contains NHP2/NOLA2, GAR1/NOLA1, NOP10/NOLA3, and DKC1/NOLA4, which is presumed to be the catalytic subunit. The complex contains a stable core formed by binding of one or two NOP10-DKC1 heterodimers to NHP2; GAR1 subsequently binds to this core via DKC1. The complex binds a box H/ACA small nucleolar RNA (snoRNA), which may target the specific site of modification within the RNA substrate. During assembly, the complex contains NAF1 instead of GAR1/NOLA1. The complex also interacts with TERC, which contains a 3'-terminal domain related to the box H/ACA snoRNAs. Specific interactions with snoRNAs or TERC are mediated by GAR1 and NHP2. Associates with NOLC1/NOPP140. H/ACA snoRNPs interact with the SMN complex, consisting of SMN1 or SMN2, GEMIN2/SIP1, DDX20/GEMIN3, and GEMIN4. This is mediated by interaction between GAR1 and SMN1 or SMN2. The SMN complex may be required for correct assembly of the H/ACA snoRNP complex. Component of the telomerase holoenzyme complex composed of one molecule of TERT, one molecule of WRAP53/TCAB1, two molecules of H/ACA ribonucleoprotein complex subunits DKC1, NOP10, NHP2 and GAR1, and a telomerase RNA template component (TERC). The telomerase holoenzyme complex is associated with TEP1, SMG6/EST1A and POT1. Interacts with SHQ1; this interaction may lead to the stabilization of DKC1, from the time of its synthesis until its association with NOP10, NHP2, and NAF1 at the nascent H/ACA RNA. Interacts with HMBOX1. Interacts with DHX36. Ubiquitously expressed.

It localises to the nucleus. The protein resides in the nucleolus. It is found in the cajal body. Its subcellular location is the cytoplasm. The enzyme catalyses uridine in 5S rRNA = pseudouridine in 5S rRNA. Catalytic subunit of H/ACA small nucleolar ribonucleoprotein (H/ACA snoRNP) complex, which catalyzes pseudouridylation of rRNA. This involves the isomerization of uridine such that the ribose is subsequently attached to C5, instead of the normal N1. Each rRNA can contain up to 100 pseudouridine ('psi') residues, which may serve to stabilize the conformation of rRNAs. Required for ribosome biogenesis and telomere maintenance. Also required for correct processing or intranuclear trafficking of TERC, the RNA component of the telomerase reverse transcriptase (TERT) holoenzyme. Functionally, promotes cell to cell and cell to substratum adhesion, increases the cell proliferation rate and leads to cytokeratin hyper-expression. The chain is H/ACA ribonucleoprotein complex subunit DKC1 from Homo sapiens (Human).